Consider the following 112-residue polypeptide: Putative pterin-4-alpha-carbinolamine dehydratase (112 aa).

The protein belongs to the pterin-4-alpha-carbinolamine dehydratase family.

The enzyme catalyses (4aS,6R)-4a-hydroxy-L-erythro-5,6,7,8-tetrahydrobiopterin = (6R)-L-erythro-6,7-dihydrobiopterin + H2O. This chain is Putative pterin-4-alpha-carbinolamine dehydratase, found in Shewanella loihica (strain ATCC BAA-1088 / PV-4).